Consider the following 1077-residue polypeptide: Eukaryotic translation initiation factor 2-alpha kinase pek-1 (1077 aa).

An N-terminal signal peptide occupies residues 1-23 (MSVYYIVLAGFLLFMALVPFNAG). Topologically, residues 24–453 (QQYIDDDIEV…ITLMQTIFSY (430 aa)) are lumenal. Asn206 carries N-linked (GlcNAc...) asparagine glycosylation. A helical transmembrane segment spans residues 454 to 474 (IFNPTAVVSFLAGLIGVTVAV). The Cytoplasmic portion of the chain corresponds to 475-1077 (VYNKIAKSSP…HEVATHKFLQ (603 aa)). One can recognise a Protein kinase domain in the interval 604–1076 (FEVKKVIGHG…AHEVATHKFL (473 aa)). ATP is bound by residues 610–618 (IGHGGFGVV) and Lys633. Positions 727–834 (MPPVVGNTTD…FVDGSDDVDN (108 aa)) are disordered. A compositionally biased stretch (polar residues) spans 732-746 (GNTTDAENSWSTSAK). Basic and acidic residues predominate over residues 766-778 (GSDRTTAELKEES). A compositionally biased stretch (acidic residues) spans 783–796 (ESDEESDTTEDSSS). A compositionally biased stretch (low complexity) spans 797 to 808 (SDESPSSSSGSS). Asp933 functions as the Proton acceptor in the catalytic mechanism.

It belongs to the protein kinase superfamily. Ser/Thr protein kinase family. GCN2 subfamily. As to quaternary structure, forms dimers with HSPA5/BIP in resting cells. Oligomerizes in ER-stressed cells. Post-translationally, autophosphorylated. In terms of processing, N-glycosylated. In terms of tissue distribution, expressed in intestinal cells.

It localises to the endoplasmic reticulum membrane. The enzyme catalyses L-seryl-[protein] + ATP = O-phospho-L-seryl-[protein] + ADP + H(+). It catalyses the reaction L-threonyl-[protein] + ATP = O-phospho-L-threonyl-[protein] + ADP + H(+). Perturbation in protein folding in the endoplasmic reticulum (ER) promotes reversible dissociation from HSPA5/BIP and oligomerization, resulting in transautophosphorylation and kinase activity induction. Its function is as follows. Phosphorylates the alpha subunit of eukaryotic translation-initiation factor 2 (eIF2alpha), leading to its inactivation and thus to a rapid reduction of translational initiation and repression of global protein synthesis. May phosphorylate eIF2alpha during hypoxia. Proposed to have a role in alleviating endoplasmic reticulum stress. This chain is Eukaryotic translation initiation factor 2-alpha kinase pek-1 (pek-1), found in Caenorhabditis elegans.